A 620-amino-acid chain; its full sequence is Glutathione-regulated potassium-efflux system protein KefC (620 aa).

A run of 12 helical transmembrane segments spans residues 4–24, 26–46, 54–74, 90–110, 114–134, 149–169, 178–198, 218–238, 270–290, 294–314, 327–347, and 359–379; these read HTLI…PIAV, LGLG…PWGL, SILH…GLEL, GALQ…LLGL, VAEL…MQAM, FAVL…IPLL, MGAF…VVLL, VFSA…EEVG, GLLL…GTLL, LRIV…LWLI, WFAV…GAAQ, and SLTL…VILN. Residues 399–518 form the RCK N-terminal domain; sequence QPRVIIAGFG…AGVEKPERET (120 aa). Residues 597–620 form a disordered region; sequence GWQGTEEGKHTGNMADEPETKPSS.

Belongs to the monovalent cation:proton antiporter 2 (CPA2) transporter (TC 2.A.37) family. KefC subfamily. As to quaternary structure, homodimer. Interacts with the regulatory subunit KefF.

It localises to the cell inner membrane. Functionally, pore-forming subunit of a potassium efflux system that confers protection against electrophiles. Catalyzes K(+)/H(+) antiport. In Escherichia coli O7:K1 (strain IAI39 / ExPEC), this protein is Glutathione-regulated potassium-efflux system protein KefC.